The sequence spans 633 residues: Glutamyl-tRNA(Gln) amidotransferase subunit E (633 aa).

Residues 414–437 are disordered; the sequence is ALPDGNTEYMRPLPGKARMYPETD.

The protein belongs to the GatB/GatE family. GatE subfamily. As to quaternary structure, heterodimer of GatD and GatE.

It carries out the reaction L-glutamyl-tRNA(Gln) + L-glutamine + ATP + H2O = L-glutaminyl-tRNA(Gln) + L-glutamate + ADP + phosphate + H(+). Allows the formation of correctly charged Gln-tRNA(Gln) through the transamidation of misacylated Glu-tRNA(Gln) in organisms which lack glutaminyl-tRNA synthetase. The reaction takes place in the presence of glutamine and ATP through an activated gamma-phospho-Glu-tRNA(Gln). The GatDE system is specific for glutamate and does not act on aspartate. This Pyrococcus abyssi (strain GE5 / Orsay) protein is Glutamyl-tRNA(Gln) amidotransferase subunit E.